Reading from the N-terminus, the 262-residue chain is Acyl-[acyl-carrier-protein]--UDP-N-acetylglucosamine O-acyltransferase (262 aa).

This sequence belongs to the transferase hexapeptide repeat family. LpxA subfamily. In terms of assembly, homotrimer.

The protein localises to the cytoplasm. The enzyme catalyses a (3R)-hydroxyacyl-[ACP] + UDP-N-acetyl-alpha-D-glucosamine = a UDP-3-O-[(3R)-3-hydroxyacyl]-N-acetyl-alpha-D-glucosamine + holo-[ACP]. Its pathway is glycolipid biosynthesis; lipid IV(A) biosynthesis; lipid IV(A) from (3R)-3-hydroxytetradecanoyl-[acyl-carrier-protein] and UDP-N-acetyl-alpha-D-glucosamine: step 1/6. Functionally, involved in the biosynthesis of lipid A, a phosphorylated glycolipid that anchors the lipopolysaccharide to the outer membrane of the cell. The polypeptide is Acyl-[acyl-carrier-protein]--UDP-N-acetylglucosamine O-acyltransferase (Mannheimia succiniciproducens (strain KCTC 0769BP / MBEL55E)).